A 948-amino-acid chain; its full sequence is 3-hydroxy-3-methylglutaryl-coenzyme A reductase (948 aa).

Transmembrane regions (helical) follow at residues 9 to 25, 55 to 71, 96 to 112, 124 to 140, 207 to 223, and 286 to 302; these read LLFF…VLLI, VIIF…VLTC, LILF…VLFV, TSVF…FIVL, IIYI…FMRI, and CWST…ILHL. An N-linked (GlcNAc...) asparagine glycan is attached at asparagine 316. Residues 347-363 form a helical membrane-spanning segment; the sequence is VINANLVVYLFLGLFLF. The segment at 364–466 is linker; sequence KRIRLNKPIN…MLTEKIKQGL (103 aa). Asparagine 430 is a glycosylation site (N-linked (GlcNAc...) asparagine). The catalytic stretch occupies residues 467–948; the sequence is GHELSDTEIL…VNPEISHYTM (482 aa). Residues glutamate 567, lysine 699, and aspartate 777 each act as charge relay system in the active site. The active-site Proton donor is histidine 869. N-linked (GlcNAc...) asparagine glycosylation occurs at asparagine 895.

Belongs to the HMG-CoA reductase family.

The protein resides in the endoplasmic reticulum membrane. Its subcellular location is the peroxisome membrane. The enzyme catalyses (R)-mevalonate + 2 NADP(+) + CoA = (3S)-3-hydroxy-3-methylglutaryl-CoA + 2 NADPH + 2 H(+). Its pathway is metabolic intermediate biosynthesis; (R)-mevalonate biosynthesis; (R)-mevalonate from acetyl-CoA: step 3/3. Its function is as follows. This transmembrane glycoprotein is involved in the control of cholesterol and nonsterol isoprenoid compounds biosynthesis. It is the rate-limiting enzyme of sterol biosynthesis. The sequence is that of 3-hydroxy-3-methylglutaryl-coenzyme A reductase from Schistosoma mansoni (Blood fluke).